We begin with the raw amino-acid sequence, 353 residues long: Quinolinate synthase (353 aa).

Iminosuccinate contacts are provided by His-47 and Ser-68. Cys-113 is a [4Fe-4S] cluster binding site. Residues 139–141 (YAN) and Ser-156 each bind iminosuccinate. A [4Fe-4S] cluster-binding site is contributed by Cys-200. Iminosuccinate contacts are provided by residues 226–228 (HPE) and Thr-243. Residue Cys-297 coordinates [4Fe-4S] cluster.

The protein belongs to the quinolinate synthase family. Type 1 subfamily. [4Fe-4S] cluster is required as a cofactor.

It is found in the cytoplasm. The enzyme catalyses iminosuccinate + dihydroxyacetone phosphate = quinolinate + phosphate + 2 H2O + H(+). It functions in the pathway cofactor biosynthesis; NAD(+) biosynthesis; quinolinate from iminoaspartate: step 1/1. In terms of biological role, catalyzes the condensation of iminoaspartate with dihydroxyacetone phosphate to form quinolinate. The chain is Quinolinate synthase from Yersinia pestis bv. Antiqua (strain Nepal516).